Consider the following 318-residue polypeptide: DNA repair nuclease/redox regulator APEX1 (318 aa).

The necessary for interaction with YBX1, binding to RNA, association together with NPM1 to rRNA, endoribonuclease activity on abasic RNA and localization in the nucleoli stretch occupies residues 1 to 33 (MPKRGKKGAVAEDGDELKTEPEAKKSKTTAKKN). The disordered stretch occupies residues 1–60 (MPKRGKKGAVAEDGDELKTEPEAKKSKTTAKKNDKEAAGEGPALYEDPPDQKTSPSGKPA). N6-acetyllysine; by EP300 occurs at positions 6 and 7. A Nuclear localization signal (NLS) motif is present at residues 8-13 (GAVAED). The segment covering 16–38 (ELKTEPEAKKSKTTAKKNDKEAA) has biased composition (basic and acidic residues). The necessary for interaction with NPM1 and for efficient rRNA binding stretch occupies residues 23–33 (AKKSKTTAKKN). N6-acetyllysine occurs at positions 27, 31, 32, and 35. S54 is subject to Phosphoserine. Residues 64 to 80 (ICSWNVDGLRAWIKKKG) carry the Nuclear export signal (NES) motif. C65 bears the S-nitrosocysteine; alternate mark. A disulfide bridge links C65 with C93. D70 is a Mg(2+) binding site. C93 is subject to S-nitrosocysteine; alternate. E96 is a binding site for Mg(2+). Y171 is a catalytic residue. K197 is subject to N6-acetyllysine. D210 and N212 together coordinate Mg(2+). D210 functions as the Proton donor/acceptor in the catalytic mechanism. T233 is modified (phosphothreonine; by CDK5). Positions 289 to 318 (HSLLTALCDSKIRSKALGSDHCPITLYLAL) are mitochondrial targeting sequence (MTS). D308 contacts Mg(2+). C310 bears the S-nitrosocysteine mark.

Belongs to the DNA repair enzymes AP/ExoA family. Monomer. Homodimer; disulfide-linked. Component of the SET complex, composed of at least APEX1, SET, ANP32A, HMGB2, NME1 and TREX1. Associates with the dimer XRCC5/XRCC6 in a DNA-dependent manner. Interacts with SIRT1; the interaction is increased in the context of genotoxic stress. Interacts with HDAC1, HDAC2 and HDAC3; the interactions are not dependent on the APEX1 acetylation status. Interacts with XRCC1; the interaction is induced by SIRT1 and increased with the APEX1 acetylated form. Interacts with NPM1 (via N-terminal domain); the interaction is RNA-dependent and decreases in hydrogen peroxide-damaged cells. Interacts (via N-terminus) with YBX1 (via C-terminus); the interaction is increased in presence of APEX1 acetylated at Lys-6 and Lys-7. Interacts with HNRNPL; the interaction is DNA-dependent. Interacts (via N-terminus) with KPNA1 and KPNA2. Interacts with TXN; the interaction stimulates the FOS/JUN AP-1 complex DNA-binding activity in a redox-dependent manner. Interacts with GZMA, KRT8, MDM2, POLB, PRDX6, PRPF19, RPLP0, TOMM20 and WDR77. Binds to CDK5. Mg(2+) serves as cofactor. Requires Mn(2+) as cofactor. Post-translationally, phosphorylated. Phosphorylation by kinase PKC or casein kinase CK2 results in enhanced redox activity that stimulates binding of the FOS/JUN AP-1 complex to its cognate binding site. AP-endodeoxyribonuclease activity is not affected by CK2-mediated phosphorylation. Phosphorylation of Thr-233 by CDK5 in response to MPP(+)/MPTP (1-methyl-4-phenylpyridinium) reduces AP-endodeoxyribonuclease activity resulting in accumulation of DNA damage and contributing to neuronal death. In terms of processing, acetylated on Lys-6 and Lys-7. Acetylation is increased by the transcriptional coactivator EP300 acetyltransferase, genotoxic agents like H(2)O(2) and methyl methanesulfonate (MMS). Acetylation increases its binding affinity to the negative calcium response element (nCaRE) DNA promoter. The acetylated form induces a stronger binding of YBX1 to the Y-box sequence in the MDR1 promoter than the unacetylated form. Deacetylated on lysines. Lys-6 and Lys-7 are deacetylated by SIRT1. Cleaved at Lys-31 by granzyme A to create the mitochondrial form; leading in reduction of binding to DNA, AP endodeoxyribonuclease activity, redox activation of transcription factors and to enhanced cell death. Cleaved by granzyme K; leading to intracellular ROS accumulation and enhanced cell death after oxidative stress. Post-translationally, cys-69 and Cys-93 are nitrosylated in response to nitric oxide (NO) and lead to the exposure of the nuclear export signal (NES). In terms of processing, ubiquitinated by MDM2; leading to translocation to the cytoplasm and proteasomal degradation.

It localises to the nucleus. It is found in the nucleolus. Its subcellular location is the nucleus speckle. The protein resides in the endoplasmic reticulum. The protein localises to the cytoplasm. It localises to the mitochondrion. The catalysed reaction is a deoxyribonucleotide-2'-deoxyribose-5'-monophosphate-DNA + H2O = a 5'-end 2'-deoxyribose-5'-monophosphate-DNA + a 3'-end 2'-deoxyribonucleotide-DNA + H(+). It catalyses the reaction Exonucleolytic cleavage in the 3'- to 5'-direction to yield nucleoside 5'-phosphates.. The enzyme catalyses a 3'-end 2'-deoxyribonucleotide-3'-phosphoglycolate-DNA + H2O = 2-phosphoglycolate + a 3'-end 2'-deoxyribonucleotide-DNA + H(+). It carries out the reaction a 3'-end 2'-deoxyribonucleotide-8-oxoguanine-DNA + H2O = 8-oxo-dGMP + a 3'-end 2'-deoxyribonucleotide-DNA + H(+). NPM1 stimulates endodeoxyribonuclease activity on double-stranded DNA with AP sites, but inhibits endoribonuclease activity on single-stranded RNA containing AP sites. Its function is as follows. Multifunctional protein that plays a central role in the cellular response to oxidative stress. The two major activities of APEX1 are DNA repair and redox regulation of transcriptional factors. Functions as an apurinic/apyrimidinic (AP) endodeoxyribonuclease in the base excision repair (BER) pathway of DNA lesions induced by oxidative and alkylating agents. Initiates repair of AP sites in DNA by catalyzing hydrolytic incision of the phosphodiester backbone immediately adjacent to the damage, generating a single-strand break with 5'-deoxyribose phosphate and 3'-hydroxyl ends. Also incises at AP sites in the DNA strand of DNA/RNA hybrids, single-stranded DNA regions of R-loop structures, and single-stranded RNA molecules. Operates at switch sites of immunoglobulin (Ig) constant regions where it mediates Ig isotype class switch recombination. Processes AP sites induced by successive action of AICDA and UNG. Generates staggered nicks in opposite DNA strands resulting in the formation of double-strand DNA breaks that are finally resolved via non-homologous end joining repair pathway. Has 3'-5' exodeoxyribonuclease activity on mismatched deoxyribonucleotides at the 3' termini of nicked or gapped DNA molecules during short-patch BER. Possesses DNA 3' phosphodiesterase activity capable of removing lesions (such as phosphoglycolate and 8-oxoguanine) blocking the 3' side of DNA strand breaks. Also acts as an endoribonuclease involved in the control of single-stranded RNA metabolism. Plays a role in regulating MYC mRNA turnover by preferentially cleaving in between UA and CA dinucleotides of the MYC coding region determinant (CRD). In association with NMD1, plays a role in the rRNA quality control process during cell cycle progression. Acts as a loading factor for POLB onto non-incised AP sites in DNA and stimulates the 5'-terminal deoxyribose 5'-phosphate (dRp) excision activity of POLB. Exerts reversible nuclear redox activity to regulate DNA binding affinity and transcriptional activity of transcriptional factors by controlling the redox status of their DNA-binding domain, such as the FOS/JUN AP-1 complex after exposure to IR. Involved in calcium-dependent down-regulation of parathyroid hormone (PTH) expression by binding to negative calcium response elements (nCaREs). Together with HNRNPL or the dimer XRCC5/XRCC6, associates with nCaRE, acting as an activator of transcriptional repression. May also play a role in the epigenetic regulation of gene expression by participating in DNA demethylation. Stimulates the YBX1-mediated MDR1 promoter activity, when acetylated at Lys-6 and Lys-7, leading to drug resistance. Plays a role in protection from granzyme-mediated cellular repair leading to cell death. Binds DNA and RNA. Associates, together with YBX1, on the MDR1 promoter. Together with NPM1, associates with rRNA. The polypeptide is DNA repair nuclease/redox regulator APEX1 (APEX1) (Pongo pygmaeus (Bornean orangutan)).